Consider the following 421-residue polypeptide: Testin (421 aa).

A PET domain is found at 92-199 (MILTNPVAAK…GDVKLPRDMN (108 aa)). Disordered stretches follow at residues 133 to 164 (EKQP…PSKC) and 193 to 213 (KLPR…GGDR). The span at 155-164 (PAHDQDPSKC) shows a compositional bias: basic and acidic residues. LIM zinc-binding domains lie at 234–297 (YSCY…CDSE), 299–359 (PRCA…NHAV), and 362–421 (QGCH…KMMS).

This sequence belongs to the prickle / espinas / testin family. As to quaternary structure, interacts via LIM domain 1 with ZYX. Interacts (via LIM domain 3) with ENAH and VASP. Interacts with ALKBH4, talin, actin, alpha-actinin, GRIP1 and PXN. Interacts (via LIM domain 2) with ACTL7A (via N-terminus). Heterodimer with ACTL7A; the heterodimer interacts with ENAH to form a heterotrimer.

It is found in the cytoplasm. The protein localises to the cell junction. The protein resides in the focal adhesion. Its function is as follows. Scaffold protein that may play a role in cell adhesion, cell spreading and in the reorganization of the actin cytoskeleton. Plays a role in the regulation of cell proliferation. May act as a tumor suppressor. The sequence is that of Testin (TES) from Ovis aries (Sheep).